Reading from the N-terminus, the 194-residue chain is Fe/S biogenesis protein NfuA (194 aa).

C151 and C154 together coordinate [4Fe-4S] cluster.

The protein belongs to the NfuA family. In terms of assembly, homodimer. The cofactor is [4Fe-4S] cluster.

Functionally, involved in iron-sulfur cluster biogenesis. Binds a 4Fe-4S cluster, can transfer this cluster to apoproteins, and thereby intervenes in the maturation of Fe/S proteins. Could also act as a scaffold/chaperone for damaged Fe/S proteins. This is Fe/S biogenesis protein NfuA from Photobacterium profundum (strain SS9).